Here is a 323-residue protein sequence, read N- to C-terminus: MIRSIVRGFGAALPKRVMTNSEIEGVVETSDEWIVQRTGIRQRYIAGEGETTASLGEAAARAALDNAGLTPADIDLIILATSTPDNTFPATAVNIQNRLGMTHGFAFDMQAVCSGFVYAVATADLYIRGGMAKRVLVIGAETFSRILDWKDRTTCVLFGDGAGALVIEAGEGEGTSSDRGILTSQLRSDGSHKDKLYVDGGPSTTGTVGHLRMEGREVFKHAVGMITDVIEQAFEATGTTADDLDWLVPHQANKRIIDGSAKKLNIDPEKVVITVDKHGNTSAASIPLALAVAASDGRIKKGDLVMLEAMGGGFTWGAVLLRW.

Catalysis depends on residues cysteine 113 and histidine 250. Positions 251–255 are ACP-binding; the sequence is QANKR. Asparagine 280 is a catalytic residue.

The protein belongs to the thiolase-like superfamily. FabH family. As to quaternary structure, homodimer.

Its subcellular location is the cytoplasm. The catalysed reaction is malonyl-[ACP] + acetyl-CoA + H(+) = 3-oxobutanoyl-[ACP] + CO2 + CoA. Its pathway is lipid metabolism; fatty acid biosynthesis. Its function is as follows. Catalyzes the condensation reaction of fatty acid synthesis by the addition to an acyl acceptor of two carbons from malonyl-ACP. Catalyzes the first condensation reaction which initiates fatty acid synthesis and may therefore play a role in governing the total rate of fatty acid production. Possesses both acetoacetyl-ACP synthase and acetyl transacylase activities. Its substrate specificity determines the biosynthesis of branched-chain and/or straight-chain of fatty acids. The polypeptide is Beta-ketoacyl-[acyl-carrier-protein] synthase III (Agrobacterium fabrum (strain C58 / ATCC 33970) (Agrobacterium tumefaciens (strain C58))).